The sequence spans 322 residues: Aspartate carbamoyltransferase catalytic subunit (322 aa).

Residues Arg-65 and Thr-66 each contribute to the carbamoyl phosphate site. Lys-93 is an L-aspartate binding site. The carbamoyl phosphate site is built by Arg-115, His-143, and Gln-146. Positions 176 and 230 each coordinate L-aspartate. Gly-271 and Pro-272 together coordinate carbamoyl phosphate.

It belongs to the aspartate/ornithine carbamoyltransferase superfamily. ATCase family. Heterododecamer (2C3:3R2) of six catalytic PyrB chains organized as two trimers (C3), and six regulatory PyrI chains organized as three dimers (R2).

The catalysed reaction is carbamoyl phosphate + L-aspartate = N-carbamoyl-L-aspartate + phosphate + H(+). The protein operates within pyrimidine metabolism; UMP biosynthesis via de novo pathway; (S)-dihydroorotate from bicarbonate: step 2/3. In terms of biological role, catalyzes the condensation of carbamoyl phosphate and aspartate to form carbamoyl aspartate and inorganic phosphate, the committed step in the de novo pyrimidine nucleotide biosynthesis pathway. The polypeptide is Aspartate carbamoyltransferase catalytic subunit (Brucella anthropi (strain ATCC 49188 / DSM 6882 / CCUG 24695 / JCM 21032 / LMG 3331 / NBRC 15819 / NCTC 12168 / Alc 37) (Ochrobactrum anthropi)).